A 344-amino-acid chain; its full sequence is Phenylalanine--tRNA ligase alpha subunit (344 aa).

Glu-256 contacts Mg(2+).

The protein belongs to the class-II aminoacyl-tRNA synthetase family. Phe-tRNA synthetase alpha subunit type 1 subfamily. Tetramer of two alpha and two beta subunits. It depends on Mg(2+) as a cofactor.

The protein resides in the cytoplasm. It catalyses the reaction tRNA(Phe) + L-phenylalanine + ATP = L-phenylalanyl-tRNA(Phe) + AMP + diphosphate + H(+). The protein is Phenylalanine--tRNA ligase alpha subunit of Geobacillus thermodenitrificans (strain NG80-2).